Here is a 681-residue protein sequence, read N- to C-terminus: RNA polymerase sigma factor RpoD (681 aa).

Disordered regions lie at residues methionine 1 to lysine 60 and aspartate 239 to lysine 270. Residues glutamate 261 to lysine 270 are compositionally biased toward basic and acidic residues. The tract at residues methionine 446 to threonine 516 is sigma-70 factor domain-2. The short motif at aspartate 470–glutamine 473 is the Interaction with polymerase core subunit RpoC element. The segment at aspartate 525–histidine 601 is sigma-70 factor domain-3. The tract at residues valine 614–serine 668 is sigma-70 factor domain-4. The segment at residues leucine 641 to serine 660 is a DNA-binding region (H-T-H motif).

This sequence belongs to the sigma-70 factor family. RpoD/SigA subfamily. In terms of assembly, interacts transiently with the RNA polymerase catalytic core.

The protein resides in the cytoplasm. Its function is as follows. Sigma factors are initiation factors that promote the attachment of RNA polymerase to specific initiation sites and are then released. This sigma factor is the primary sigma factor during exponential growth. The protein is RNA polymerase sigma factor RpoD of Helicobacter pylori (strain J99 / ATCC 700824) (Campylobacter pylori J99).